Here is a 194-residue protein sequence, read N- to C-terminus: dCTP deaminase, dUMP-forming (194 aa).

DCTP-binding positions include 104 to 109, Asp122, 130 to 132, Gln151, Tyr165, Lys172, and Gln176; these read RSSLGR and TLE. The active-site Proton donor/acceptor is the Glu132.

It belongs to the dCTP deaminase family. In terms of assembly, homotrimer.

It carries out the reaction dCTP + 2 H2O = dUMP + NH4(+) + diphosphate. The protein operates within pyrimidine metabolism; dUMP biosynthesis; dUMP from dCTP: step 1/1. Functionally, bifunctional enzyme that catalyzes both the deamination of dCTP to dUTP and the hydrolysis of dUTP to dUMP without releasing the toxic dUTP intermediate. This chain is dCTP deaminase, dUMP-forming, found in Dictyoglomus thermophilum (strain ATCC 35947 / DSM 3960 / H-6-12).